A 283-amino-acid polypeptide reads, in one-letter code: 4-diphosphocytidyl-2-C-methyl-D-erythritol kinase (283 aa).

K10 is an active-site residue. An ATP-binding site is contributed by 99–109 (PMGGGLGGGSS). The active site involves D141.

The protein belongs to the GHMP kinase family. IspE subfamily. As to quaternary structure, homodimer.

It catalyses the reaction 4-CDP-2-C-methyl-D-erythritol + ATP = 4-CDP-2-C-methyl-D-erythritol 2-phosphate + ADP + H(+). Its pathway is isoprenoid biosynthesis; isopentenyl diphosphate biosynthesis via DXP pathway; isopentenyl diphosphate from 1-deoxy-D-xylulose 5-phosphate: step 3/6. Catalyzes the phosphorylation of the position 2 hydroxy group of 4-diphosphocytidyl-2C-methyl-D-erythritol. This Escherichia coli O157:H7 (strain EC4115 / EHEC) protein is 4-diphosphocytidyl-2-C-methyl-D-erythritol kinase.